A 121-amino-acid polypeptide reads, in one-letter code: MYIYWILLGLAIATEITGTLSMKWASVSEGNGGFILMLVMISLSYIFLSFAVKKIALGVAYALWEGIGILFITLFSVLLFDESLSLMKIAGLTTLVAGIVLIKSGTRKARKPELEVNHGAV.

The next 4 membrane-spanning stretches (helical) occupy residues 1-21 (MYIY…GTLS), 32-52 (GGFI…SFAV), 55-75 (IALG…ITLF), and 82-102 (ESLS…IVLI).

Belongs to the drug/metabolite transporter (DMT) superfamily. Small multidrug resistance (SMR) (TC 2.A.7.1) family. MdtJ subfamily. In terms of assembly, forms a complex with MdtI.

Its subcellular location is the cell inner membrane. In terms of biological role, catalyzes the excretion of spermidine. The protein is Spermidine export protein MdtJ of Escherichia coli O139:H28 (strain E24377A / ETEC).